The following is a 713-amino-acid chain: Polyribonucleotide nucleotidyltransferase (713 aa).

Mg(2+) is bound by residues Asp485 and Asp491. A KH domain is found at 552-611 (PRIHTIKINPEKIKDVIGKGGSVIRALTEETGTNIELDDDGTVRISAVANEAAMEAIRRI). An S1 motif domain is found at 621 to 689 (NRIYEGKVVR…RQGRVRLSIK (69 aa)).

The protein belongs to the polyribonucleotide nucleotidyltransferase family. As to quaternary structure, component of the RNA degradosome, which is a multiprotein complex involved in RNA processing and mRNA degradation. Mg(2+) is required as a cofactor.

It is found in the cytoplasm. The enzyme catalyses RNA(n+1) + phosphate = RNA(n) + a ribonucleoside 5'-diphosphate. In terms of biological role, involved in mRNA degradation. Catalyzes the phosphorolysis of single-stranded polyribonucleotides processively in the 3'- to 5'-direction. The protein is Polyribonucleotide nucleotidyltransferase of Aeromonas salmonicida (strain A449).